A 132-amino-acid chain; its full sequence is Interleukin-13 (132 aa).

An N-terminal signal peptide occupies residues 1 to 18; the sequence is MALLLTAVIVLICFGGLT. 4 N-linked (GlcNAc...) asparagine glycosylation sites follow: Asn38, Asn49, Asn57, and Asn75. Intrachain disulfides connect Cys48-Cys76 and Cys64-Cys90.

The protein belongs to the IL-4/IL-13 family. As to quaternary structure, interacts with IL13RA2.

Its subcellular location is the secreted. Its function is as follows. Cytokine that plays important roles in allergic inflammation and immune response to parasite infection. Synergizes with IL2 in regulating interferon-gamma synthesis. Stimulates B-cell proliferation, and activation of eosinophils, basophils, and mast cells. Plays an important role in controlling IL33 activity by modulating the production of transmembrane and soluble forms of interleukin-1 receptor-like 1/IL1RL1. Displays the capacity to antagonize Th1-driven proinflammatory immune response and downregulates synthesis of many proinflammatory cytokines including IL1, IL6, IL10, IL12 and TNF-alpha through a mechanism that partially involves suppression of NF-kappa-B. Also functions on nonhematopoietic cells, including endothelial cells where it induces vascular cell adhesion protein 1/VCAM1, which is important in the recruitment of eosinophils. Exerts its biological effects through its receptors which comprises the IL4R chain and the IL13RA1 chain, to activate JAK1 and TYK2, leading to the activation of STAT6. Aside from IL13RA1, another receptor IL13RA2 acts as a high affinity decoy for IL13 and mediates internalization and depletion of extracellular IL13. This Bos taurus (Bovine) protein is Interleukin-13 (IL13).